We begin with the raw amino-acid sequence, 143 residues long: MLEIRITDPRWTKKLKNLDALLQKALECCLEGKKAEFSVVLTDDEFIRTLNKSYRGRDTPTNVLSFNYTNEQIGIGIIGEVILSFDRLVIEALENEIKFEDHLLHMFIHGVLHVLGYDHSSDRETLAMEKKEEEILKKLALLG.

Positions 109, 113, and 119 each coordinate Zn(2+).

Belongs to the endoribonuclease YbeY family. The cofactor is Zn(2+).

The protein localises to the cytoplasm. Single strand-specific metallo-endoribonuclease involved in late-stage 70S ribosome quality control and in maturation of the 3' terminus of the 16S rRNA. In Neorickettsia sennetsu (strain ATCC VR-367 / Miyayama) (Ehrlichia sennetsu), this protein is Endoribonuclease YbeY.